Here is a 1389-residue protein sequence, read N- to C-terminus: MNYTNALPDFLAMQRISFCWFITQGLTEELALFSRIQDFSQNTEYVMFGEEYSLIKPSYSLLIARKYSGNYRAQLVIPIEVRNKVVNSIRYHNQFPIITLPLMTTDATFIINGCERVIVSQIIRSPGVYFEKNKNQKTRNQFKKKLSTDINKLRSFIPSGEAFISEFDLFFPLPTSIYDPVKKKKKIIPHWQSNSIYYYSIKYLKQKQQNSTFYFLQSFKLYRVASKLLSSKSKQRVIQLFLKWLKLKNKSFEFQDEKQIYLIKYFNFLLTSLMKYEILQSSLTTKFNEDKTILLSKFTKSNAILNLSDKQIINLSMIYNKLIINSQTLAQMELNSNLFLITKEPREWLTEMSNFLFLKKQISKATFTLKSFQELTQLQNLKPAIYFSISLKEQLKYVFGKNKLTYKSDRHKYLKTKTQFLLYRKDHEIKTNYNKKYDEKDLYTATVIPEYGSWIRIGFQRNTKINSYKYPLKSQEDEVIIQLDKINQKPVLYLLKEMGLTDLEIYQNLEYADFFYFNKPLLINSKRLSEPLSRFNLGLSYFKNISEFSRIFDPTYYRLGRVGRLKINSRLNLKMSERLQTITYEDIFAITDKLINLTISKTVQDDIDHLKNRRVRSVGELLQNLFRIGFQRLGRKLRNQTNKIDSGQLLSFNIVNASIREFFGSSQLSQYLDQTNPLSSLTHRRRVSGLGPGGFDRDRISFAVRDIHPSHYGRICPIETPEGQNVGLIASLTTCARVNKSGFLETPFWRVINGKVVKTGQPVYLTADIEDFYKIAPADIATNKDNYLTKNVIPVRYKQDFVNVTPSEVDFIAISTIQVVSVAASLIPFFEHDDANRALMGSNMQRQSVPLLLPQKPIVGTGLENQIAIDSGMTLNSYSNGVVSSVTANKIVVNDKTGKRLTYKLQKYLRSNQQTCINHRPIVWKGEQVKSGQILTDGPAITSSELSLGQNVLIGYMPWQGYNFEDAILINERLVYDDVFTSIHIERYKIEIDRNSDTLERTTKNIPNLNPREIRHLNDDGIVTVGTFVRPGDILVGKVISNNTSEQLPESKLLRAIFGAKAKGVKDNSYRMSDGEYGRVIETVTFNRRTKLTYKFEKIYVFIAQIRKIQVGDKIAGRHGNKGIISRILSRQDMPFLPDGTPLDILLNPLGVPSRMNVGQLYECLLGLAGDKLNARFKILPFDEMYGLEISRILINKKLRQASIAKNESWLFNPYAPGKMVLIDGRTGKEFENPVTVGNAYMLKLIHLVDDKMHARATGPYSLITQQPLRGKAQHGGQRFGEMEVWALEGFGAAFTLKELLTIKSDDMQGRNETLNAIVKGQQIPKFGIPESFKVLLHELRSIGLDMSTYKINRFNSTKRYEVEVNLIEKYNALSKTFSPTSNINDISF.

The protein belongs to the RNA polymerase beta chain family. In plastids the minimal PEP RNA polymerase catalytic core is composed of four subunits: alpha, beta, beta', and beta''. When a (nuclear-encoded) sigma factor is associated with the core the holoenzyme is formed, which can initiate transcription.

The protein resides in the plastid. Its subcellular location is the chloroplast. The enzyme catalyses RNA(n) + a ribonucleoside 5'-triphosphate = RNA(n+1) + diphosphate. Functionally, DNA-dependent RNA polymerase catalyzes the transcription of DNA into RNA using the four ribonucleoside triphosphates as substrates. This chain is DNA-directed RNA polymerase subunit beta, found in Phaeodactylum tricornutum (strain CCAP 1055/1).